A 111-amino-acid polypeptide reads, in one-letter code: NADH-ubiquinone oxidoreductase chain 4 (111 aa).

A helical membrane pass occupies residues 35-55; that stretch reads LITSLFSWLDITVFLTGLSAF.

It belongs to the complex I subunit 4 family.

It is found in the mitochondrion membrane. It carries out the reaction a ubiquinone + NADH + 5 H(+)(in) = a ubiquinol + NAD(+) + 4 H(+)(out). Core subunit of the mitochondrial membrane respiratory chain NADH dehydrogenase (Complex I) that is believed to belong to the minimal assembly required for catalysis. Complex I functions in the transfer of electrons from NADH to the respiratory chain. The immediate electron acceptor for the enzyme is believed to be ubiquinone. The sequence is that of NADH-ubiquinone oxidoreductase chain 4 (MT-ND4) from Caiman crocodilus (Spectacled caiman).